We begin with the raw amino-acid sequence, 252 residues long: Urease accessory protein UreD (252 aa).

The protein belongs to the UreD family. As to quaternary structure, ureD, UreF and UreG form a complex that acts as a GTP-hydrolysis-dependent molecular chaperone, activating the urease apoprotein by helping to assemble the nickel containing metallocenter of UreC. The UreE protein probably delivers the nickel.

The protein resides in the cytoplasm. Required for maturation of urease via the functional incorporation of the urease nickel metallocenter. This Streptomyces avermitilis (strain ATCC 31267 / DSM 46492 / JCM 5070 / NBRC 14893 / NCIMB 12804 / NRRL 8165 / MA-4680) protein is Urease accessory protein UreD.